The sequence spans 233 residues: Pyridoxal phosphate homeostasis protein (233 aa).

N6-(pyridoxal phosphate)lysine is present on lysine 35.

It belongs to the pyridoxal phosphate-binding protein YggS/PROSC family.

Its function is as follows. Pyridoxal 5'-phosphate (PLP)-binding protein, which is involved in PLP homeostasis. The protein is Pyridoxal phosphate homeostasis protein of Pasteurella multocida (strain Pm70).